Here is a 241-residue protein sequence, read N- to C-terminus: ATP synthase subunit a (241 aa).

5 helical membrane passes run 30–50, 89–109, 128–148, 193–213, and 214–234; these read GQVF…VLVG, LPFI…GALI, INTT…AGLS, LAVG…VMLL, and GLFT…FYIG.

This sequence belongs to the ATPase A chain family. As to quaternary structure, F-type ATPases have 2 components, CF(1) - the catalytic core - and CF(0) - the membrane proton channel. CF(1) has five subunits: alpha(3), beta(3), gamma(1), delta(1), epsilon(1). CF(0) has four main subunits: a, b, b' and c.

The protein resides in the cellular thylakoid membrane. In terms of biological role, key component of the proton channel; it plays a direct role in the translocation of protons across the membrane. In Synechococcus sp. (strain CC9902), this protein is ATP synthase subunit a.